The primary structure comprises 592 residues: MDSREENAVYDDMNLYIAPQSFIIEPNGGDELLVIGRHDKVTRVQPASGGLVANLRPTRRICGVLGTIHLLSCDYLLVATHRLFVGVLNGAVVWRLAGYDIIPYIPNSFQRKENENYLRLLRQTLDTKFFYFSYRYDLTNSLQRQREVAQSRPEVSGLLQRAEQRFVWNGYVLRQFNCDKMEKFQLPLVLGFVSINQVQINGQTFFWSIITRRSVQRAGTRLFCRGSDEQGHVANFVETEQIVEFNGQLTGFVQTRGSMPFHWHQLPNLRYKPRPVLVPGKDHLAACGLHFKEQIRLYGNNVAVNLVDHKGAEGELEATYARLVREMGNPQVRYESFDFHSECRKMRWDRLNILIDRLAHEQDQFGVYHVFDDGKLVSTQTGVFRTNCIDCLDRTNVVQSMLARRSLTAVLQKLGVLHVGQKVEHASDIFESIFKGVWADNADLVSLQYSGTCALKTDFTRTGKRTKSGAMQDGKNSLMRYYLNNFADGQRQDSIDLFLGKYLVNDNEGGAVPSPLESKHGWRFFTFPSVLLVAVAMFMITMTYPAEFNTENLLFMLFWGAMIAVSATGILHYGVEFVQWPRLFPPISFRDP.

Residues 1-523 (MDSREENAVY…SPLESKHGWR (523 aa)) are Cytoplasmic-facing. The 331-residue stretch at 121-451 (LRQTLDTKFF…ADLVSLQYSG (331 aa)) folds into the SAC domain. Residues 524–544 (FFTFPSVLLVAVAMFMITMTY) form a helical membrane-spanning segment. Residues 545–552 (PAEFNTEN) are Lumenal-facing. A helical membrane pass occupies residues 553-573 (LLFMLFWGAMIAVSATGILHY). The Cytoplasmic segment spans residues 574–592 (GVEFVQWPRLFPPISFRDP).

It is found in the endoplasmic reticulum membrane. The protein resides in the golgi apparatus membrane. The enzyme catalyses a 1,2-diacyl-sn-glycero-3-phospho-(1D-myo-inositol-3-phosphate) + H2O = a 1,2-diacyl-sn-glycero-3-phospho-(1D-myo-inositol) + phosphate. It catalyses the reaction a 1,2-diacyl-sn-glycero-3-phospho-(1D-myo-inositol 4-phosphate) + H2O = a 1,2-diacyl-sn-glycero-3-phospho-(1D-myo-inositol) + phosphate. Its function is as follows. Phosphoinositide phosphatase which catalyzes the hydrolysis of phosphatidylinositol 3-phosphate (PtdIns(3)P) and phosphatidylinositol 4-phosphate (PtdIns(4)P). Has low activity towards phosphatidylinositol-3,5-bisphosphate (PtdIns(3,5)P2). The chain is Phosphatidylinositol-3-phosphatase SAC1 (Sac1) from Drosophila melanogaster (Fruit fly).